Reading from the N-terminus, the 376-residue chain is Light-dependent chlorophyll f synthase (376 aa).

Positions 1 to 22 (MKLESDHVIATSDSSDYTSEPT) are disordered. Over residues 11–22 (TSDSSDYTSEPT) the composition is skewed to polar residues. A run of 5 helical transmembrane segments spans residues 51–68 (YVGW…TAAT), 140–155 (HFLI…EWEL), 164–178 (WISL…ASVS), 219–240 (LHQL…HGSL), and 298–312 (FLAA…SAAL). His140 provides a ligand contact to a chlorophyll. An a chlorophyll-binding site is contributed by His220.

The protein belongs to the reaction center PufL/M/PsbA/D family. In terms of assembly, homodimer.

The protein localises to the cellular thylakoid membrane. Functionally, synthesizes chlorophyll f or chlorophyllide f (Chl f, 2-formyl chlorophyll a), probably by oxidation of chlorophyll a or chlorophyllide a and reduction of plastoquinone. The reaction is probably light-dependent. Chl f absorbs far red light (FRL, 707 nm in 100% methanol), and is synthesized when cells are grown in FRL, where it provides the advantage of extending the spectral range of harvested light in terrestrial cyanobacteria. When ectopically expressed in Synechococcus PCC 7002 (which does not grow in FRL and does not make Chl f) produces Chl f (0.059% of total chlorophyll). The protein is Light-dependent chlorophyll f synthase of Chlorogloeopsis fritschii (strain PCC 9212).